The chain runs to 640 residues: Phosphatidylinositol-binding clathrin assembly protein (640 aa).

At S2 the chain carries N-acetylserine. Positions 14-145 constitute an ENTH domain; the sequence is QHSVTGSAVS…VSYRQVAFDF (132 aa). Phosphoserine is present on residues S16 and S20. The interaction with PIMREG stretch occupies residues 221–294; the sequence is KYFDMKKNQC…LEGKKIKDST (74 aa). K238 is covalently cross-linked (Glycyl lysine isopeptide (Lys-Gly) (interchain with G-Cter in SUMO2)). Phosphoserine is present on residues S303 and S315. Positions 543–568 are disordered; it reads NGTTKNDVSCSQPGEKKLTGGSNWQP. Positions 544–554 are enriched in polar residues; the sequence is GTTKNDVSCSQ.

This sequence belongs to the PICALM/SNAP91 family. Binds to clathrin; involves primarily the C-terminal sequences, but the full-length protein is required for full binding capacity. Binds phosphatidylinositol 4,5- bisphosphate. Interacts with PIMREG; this interaction may change the subcellular location into the nucleus. Interacts with AP2A1 (via its alpha-appendage domain). Interacts (via N-terminus) with VAMP2; VAMP3; VAMP7 and VAMP8 (Via N-terminus). Interacts with LC3/MAP1LC3A. As to expression, isoform 2 was found in most tissues examined. Isoform 1 has an overlapping expression pattern but is absent from lung, heart and pancreas. Both isoforms are widely expressed in the brain, higher levels are seen in hippocampus, dentate gyrus, medial habenula nucleus and cerebellar granule cells.

The protein localises to the cell membrane. The protein resides in the membrane. It is found in the clathrin-coated pit. It localises to the golgi apparatus. Its subcellular location is the cytoplasmic vesicle. The protein localises to the clathrin-coated vesicle. The protein resides in the nucleus. In terms of biological role, cytoplasmic adapter protein that plays a critical role in clathrin-mediated endocytosis which is important in processes such as internalization of cell receptors, synaptic transmission or removal of apoptotic cells. Recruits AP-2 and attaches clathrin triskelions to the cytoplasmic side of plasma membrane leading to clathrin-coated vesicles (CCVs) assembly. Furthermore, regulates clathrin-coated vesicle size and maturation by directly sensing and driving membrane curvature. In addition to binding to clathrin, mediates the endocytosis of small R-SNARES (Soluble NSF Attachment Protein REceptors) between plasma membranes and endosomes including VAMP2, VAMP3, VAMP4, VAMP7 or VAMP8. In turn, PICALM-dependent SNARE endocytosis is required for the formation and maturation of autophagic precursors. Modulates thereby autophagy and the turnover of autophagy substrates such as MAPT/TAU or amyloid precursor protein cleaved C-terminal fragment (APP-CTF). The chain is Phosphatidylinositol-binding clathrin assembly protein (Picalm) from Rattus norvegicus (Rat).